The following is a 326-amino-acid chain: Immune-associated nucleotide-binding protein 4 (326 aa).

In terms of domain architecture, AIG1-type G spans 17-225; sequence EPIKNIVLVG…FTDEMHRKIQ (209 aa). The interval 26–33 is G1; that stretch reads GRTGNGKS. GTP is bound by residues 26-34 and S47; that span reads GRTGNGKSA. The tract at residues 53 to 57 is G2; the sequence is GVTMK. Positions 75–78 are G3; that stretch reads DTPG. A G4 region spans residues 145-148; the sequence is TGGD. Residues 184–186 are G5; the sequence is DNR. Residue N185 participates in GTP binding. Residues 217 to 241 are a coiled coil; the sequence is TDEMHRKIQKEAETLREQQKEVESK.

This sequence belongs to the TRAFAC class TrmE-Era-EngA-EngB-Septin-like GTPase superfamily. AIG1/Toc34/Toc159-like paraseptin GTPase family. IAN subfamily. As to expression, expressed in radicles of the germinating seeds.

In Arabidopsis thaliana (Mouse-ear cress), this protein is Immune-associated nucleotide-binding protein 4.